Here is a 449-residue protein sequence, read N- to C-terminus: Glutamyl-tRNA(Gln) amidotransferase subunit A (449 aa).

Active-site charge relay system residues include Lys-51 and Ser-126. The segment at 103-128 (STTESSAHGKTLNPVDSSRVPGGSSG) is disordered. The span at 119–128 (SSRVPGGSSG) shows a compositional bias: low complexity. Ser-150 (acyl-ester intermediate) is an active-site residue.

It belongs to the amidase family. GatA subfamily. Heterotrimer of A, B and C subunits.

The catalysed reaction is L-glutamyl-tRNA(Gln) + L-glutamine + ATP + H2O = L-glutaminyl-tRNA(Gln) + L-glutamate + ADP + phosphate + H(+). Functionally, allows the formation of correctly charged Gln-tRNA(Gln) through the transamidation of misacylated Glu-tRNA(Gln) in organisms which lack glutaminyl-tRNA synthetase. The reaction takes place in the presence of glutamine and ATP through an activated gamma-phospho-Glu-tRNA(Gln). The sequence is that of Glutamyl-tRNA(Gln) amidotransferase subunit A from Wolinella succinogenes (strain ATCC 29543 / DSM 1740 / CCUG 13145 / JCM 31913 / LMG 7466 / NCTC 11488 / FDC 602W) (Vibrio succinogenes).